A 107-amino-acid polypeptide reads, in one-letter code: uncharacterized protein (107 aa).

The first 18 residues, 1-18, serve as a signal peptide directing secretion; sequence MRTLMLIILSILIYLSSA.

This is an uncharacterized protein from Caenorhabditis elegans.